A 320-amino-acid chain; its full sequence is Small ribosomal subunit protein uS2 (320 aa).

Acidic residues predominate over residues 1 to 22 (MADETTTDTPDVQDEDAPDEDA). The disordered stretch occupies residues 1–83 (MADETTTDTP…SSSEEETSHR (83 aa)). Residues 27-41 (DDTASDSTGEAAAAD) show a composition bias toward low complexity. 2 stretches are compositionally biased toward acidic residues: residues 42-57 (TDAD…EDAP) and 65-78 (DDGD…SSEE).

This sequence belongs to the universal ribosomal protein uS2 family.

This chain is Small ribosomal subunit protein uS2, found in Salinibacter ruber (strain DSM 13855 / M31).